Here is a 40-residue protein sequence, read N- to C-terminus: MADTTGRIPLWLIGTVAGILIIGLLGVFFYGSYSGLGSSL.

The helical transmembrane segment at 8 to 28 (IPLWLIGTVAGILIIGLLGVF) threads the bilayer.

Belongs to the PsbJ family. In terms of assembly, PSII is composed of 1 copy each of membrane proteins PsbA, PsbB, PsbC, PsbD, PsbE, PsbF, PsbH, PsbI, PsbJ, PsbK, PsbL, PsbM, PsbT, PsbX, PsbY, PsbZ, Psb30/Ycf12, at least 3 peripheral proteins of the oxygen-evolving complex and a large number of cofactors. It forms dimeric complexes.

It localises to the plastid. Its subcellular location is the chloroplast thylakoid membrane. Its function is as follows. One of the components of the core complex of photosystem II (PSII). PSII is a light-driven water:plastoquinone oxidoreductase that uses light energy to abstract electrons from H(2)O, generating O(2) and a proton gradient subsequently used for ATP formation. It consists of a core antenna complex that captures photons, and an electron transfer chain that converts photonic excitation into a charge separation. In Nandina domestica (Heavenly bamboo), this protein is Photosystem II reaction center protein J.